We begin with the raw amino-acid sequence, 790 residues long: MSNQPKKYETQNIANSTEESDAFDIVTIPVPSEEPQESDQTEEHESGIEQFSESHAIHVEEQSDRSFSSLEPDSEQLMKEVISPRQVSYTPQHHEKQYAMQSPNDDSLAFLDKIKAIKESLQESMEDSLATVKVVLIPVGQEIVISFKVDTVLKYLKDYFSHLLGIPLSVLQIRYSGKILRNNETLVQHGVKPQEIIQVEIFSTNPDLYPVKRIDGLTDVSQIITVTVQTGLDRYQQVAVEIVKSDFHKPFLGGFRHKVTGVEYHHAGTQTVPKKIPERLSVFCRDTQTVFQKKNLQQTTNTTSTQMTNIGVYVSNMTDKLVTPGKYFSAAEYHAQRLKAVIVIQTYYRQWHAKIFVEDLRRQKSLRLEWETQQELRKIREKEEWVKLDYHRRHNPKTSEDFEFLYNALEFWRQEELKRINQSFTGAERKAALCELLEKETQIIASIGRHRYIAYTANQEAAIQAFLDKCSAPKIWRTPNGKTIEMDTQFTIRARELQNIYKCIMLKNISQDERLDVLLTLKHTVKEHECKLTQEILELIDREVDLMMRGVKHHNLEGLRKRIATLFFHYIKTPLFNPEVAKYLKVPQDPLKFYKKIYFCHSCQLYLPSTEFSISSTSRRIYRCRNCISLENEAQKRESFLKYRCLLQQLYFTEADYEDDSKIAFLMQLQDIQYLTENIWASQSVLSAWDDLSDLVMVRWNKSLEWSPWNCILLTKDEAAAHLNLTSIEEGYERSFIHKIKHKHILAKNYFSQIPVLASFILDDPEIDEIRWKHHSDTTPKIIESQRPPP.

Positions 1–17 (MSNQPKKYETQNIANST) are enriched in polar residues. The interval 1–49 (MSNQPKKYETQNIANSTEESDAFDIVTIPVPSEEPQESDQTEEHESGIE) is disordered. The 77-residue stretch at 130-206 (ATVKVVLIPV…IQVEIFSTNP (77 aa)) folds into the Ubiquitin-like domain. The region spanning 337 to 366 (RLKAVIVIQTYYRQWHAKIFVEDLRRQKSL) is the IQ domain.

Component of the axonemal radial spoke 1 (RS1) complex, at least composed of spoke head proteins RSPH1, RSPH3, RSPH9 and the cilia-specific component RSPH4A or sperm-specific component RSPH6A, spoke stalk proteins RSPH14, DNAJB13, DYDC1, ROPN1L and NME5, and the anchor protein IQUB. Does not appear to be part of radial spoke complexes 2 or 3 (RS2 or RS3). Interacts with CALM1. Interacts with DNAJB13. Interacts with DYNLL2. Interacts with NME5. Interacts with RSPH3. Interacts with RSPH9. Interacts with ZMYND10. Interacts with calmodulin; the interaction occurs in conditions of low but not high calcium.

It is found in the cytoplasm. The protein resides in the cytoskeleton. It localises to the flagellum axoneme. Its subcellular location is the cell projection. The protein localises to the cilium. Its function is as follows. Adapter protein that anchors the radial spoke 1 (RS1) complex to the A microtubule of outer doublet microtubules in axonemes. The triple radial spokes (RS1, RS2 and RS3) are required to modulate beating of the sperm flagellum. May play a role in inhibiting signaling via MAPK1/ERK2 and MAPK3/ERK1. Additionally, may play a role in the functioning of cilia. Not required for the functioning of tracheal or ependymal cilia. The protein is IQ motif and ubiquitin-like domain-containing protein (IQUB) of Macaca fascicularis (Crab-eating macaque).